Reading from the N-terminus, the 243-residue chain is Pyridoxine 5'-phosphate synthase (243 aa).

Asn9 provides a ligand contact to 3-amino-2-oxopropyl phosphate. 1-deoxy-D-xylulose 5-phosphate is bound at residue 11–12; sequence DH. Position 20 (Arg20) interacts with 3-amino-2-oxopropyl phosphate. The active-site Proton acceptor is the His45. The 1-deoxy-D-xylulose 5-phosphate site is built by Arg47 and His52. The active-site Proton acceptor is Glu72. Residue Thr102 participates in 1-deoxy-D-xylulose 5-phosphate binding. The Proton donor role is filled by His193. 3-amino-2-oxopropyl phosphate-binding positions include Gly194 and 215–216; that span reads GH.

The protein belongs to the PNP synthase family. In terms of assembly, homooctamer; tetramer of dimers.

The protein resides in the cytoplasm. The catalysed reaction is 3-amino-2-oxopropyl phosphate + 1-deoxy-D-xylulose 5-phosphate = pyridoxine 5'-phosphate + phosphate + 2 H2O + H(+). The protein operates within cofactor biosynthesis; pyridoxine 5'-phosphate biosynthesis; pyridoxine 5'-phosphate from D-erythrose 4-phosphate: step 5/5. Catalyzes the complicated ring closure reaction between the two acyclic compounds 1-deoxy-D-xylulose-5-phosphate (DXP) and 3-amino-2-oxopropyl phosphate (1-amino-acetone-3-phosphate or AAP) to form pyridoxine 5'-phosphate (PNP) and inorganic phosphate. In Yersinia pestis, this protein is Pyridoxine 5'-phosphate synthase.